The sequence spans 745 residues: Probable xanthine dehydrogenase subunit D (745 aa).

Residues glutamine 204, phenylalanine 235, and alanine 508 each coordinate Mo-molybdopterin.

Belongs to the xanthine dehydrogenase family. Could be composed of four subunits: PucA, PucC, PucD and PucE. The cofactor is Mo-molybdopterin.

It carries out the reaction xanthine + NAD(+) + H2O = urate + NADH + H(+). The enzyme catalyses hypoxanthine + NAD(+) + H2O = xanthine + NADH + H(+). Its pathway is purine metabolism; hypoxanthine degradation; urate from hypoxanthine: step 1/2. It functions in the pathway purine metabolism; hypoxanthine degradation; urate from hypoxanthine: step 2/2. Functionally, oxidizes hypoxanthine and xanthine to uric acid. The polypeptide is Probable xanthine dehydrogenase subunit D (pucD) (Bacillus subtilis (strain 168)).